The following is a 780-amino-acid chain: Carboxysome assembly protein CsoS2 (780 aa).

The segment covering 1-15 (MARLSSRELALERRK) has biased composition (basic and acidic residues). 5 disordered regions span residues 1-173 (MARL…RAIE), 189-212 (KHGK…NPDL), 226-281 (TKAG…NRSV), 330-349 (NRVT…DEPG), and 382-444 (SLTQ…TGVT). Residues 5–24 (SSRELALERRKALTTSGKKS) form an N-repeat 1 repeat. The span at 48–78 (AAAAVEPTAPAVSAPVKPTVSFTPASPSSSS) shows a compositional bias: low complexity. The stretch at 86–105 (PSRDLVLARRDALSRRGKTA) is one N-repeat 2 repeat. Over residues 86-116 (PSRDLVLARRDALSRRGKTADTSRDRNRADV) the composition is skewed to basic and acidic residues. A compositionally biased stretch (low complexity) spans 117 to 130 (ARQTQAAAPVAASA). N-repeat repeat units follow at residues 175-194 (PSRA…GKTA) and 213-235 (TSRE…NKQS). 6 M-repeat repeats span residues 260–309 (KVGE…QTFC), 320–369 (KVRV…AAYC), 378–417 (KVGH…GDQY), 431–480 (KVGQ…NAFC), 490–535 (KVGF…LENA), and 541–599 (TSAV…ATAC). A middle region region spans residues 260 to 608 (KVGESTTSTG…CGNEAPAGTD (349 aa)). Low complexity predominate over residues 264–276 (STTSTGQTVTGTQ). 2 stretches are compositionally biased toward low complexity: residues 387-403 (GRPV…SVTG) and 432-444 (VGQS…TGVT). The tract at residues 609–749 (SHGQAPEGAA…ATVPHERKRN (141 aa)) is C-terminal domain. C-repeat repeat units lie at residues 623 to 669 (SVMS…TEQF) and 693 to 726 (EQPA…EGVS). Disordered regions lie at residues 631-661 (AQQQ…LAGG) and 686-780 (AVVS…GARG). Residues 641–651 (VTGTSYEQGNR) are compositionally biased toward polar residues. The span at 709–720 (TGDDWDRGEHVT) shows a compositional bias: basic and acidic residues. Residues 750–780 (EENEWPVSRVTGSSGNTEKGSLITVSGGARG) are C-terminal peptide. Residues 759–768 (VTGSSGNTEK) are compositionally biased toward polar residues.

Belongs to the CsoS2 family. Interacts via its N-terminal repeats with RuBisCO. Interacts with the major shell protein CsoS1. Post-translationally, unlike H.neapolitanus and predictions for P.marinus strain MIT 9313, this protein is not thought to have ribosomal frameshifting.

Functionally, required for alpha-carboxysome (Cb) assembly, mediates interaction between RuBisCO and the carboxysome shell. The protein is probably intrinsically disordered. The C-terminal repeats act as the encapsulation signal to target proteins to the Cb; they are necessary and sufficient to target both CsoS2 and foreign proteins to the Cb. The N-terminal repeats of this protein bind simultaneously to both subunits of RuBisCO. Probably also interacts with the major shell proteins (CsoS1); that interaction would increase the local concentration of CsoS2 so that it can condense RuBisCO and full carboxysomes can be formed. The sequence is that of Carboxysome assembly protein CsoS2 from Parasynechococcus marenigrum (strain WH8102).